A 215-amino-acid chain; its full sequence is Large ribosomal subunit protein uL3 (215 aa).

Q151 bears the N5-methylglutamine mark.

The protein belongs to the universal ribosomal protein uL3 family. Part of the 50S ribosomal subunit. Forms a cluster with proteins L14 and L19. Post-translationally, methylated by PrmB.

Its function is as follows. One of the primary rRNA binding proteins, it binds directly near the 3'-end of the 23S rRNA, where it nucleates assembly of the 50S subunit. The protein is Large ribosomal subunit protein uL3 of Rickettsia massiliae (strain Mtu5).